A 316-amino-acid polypeptide reads, in one-letter code: Protoheme IX farnesyltransferase (316 aa).

A run of 8 helical transmembrane segments spans residues 35-55 (VMVL…GHVQ), 56-76 (PAIG…SGCL), 119-139 (VVLG…TIVF), 156-176 (IVIG…VVTG), 183-203 (LILF…LALI), 229-246 (IVWY…PVAL), 250-272 (GLVY…IRVL), and 283-303 (AAMG…SALL).

Belongs to the UbiA prenyltransferase family. Protoheme IX farnesyltransferase subfamily.

It localises to the cell inner membrane. The enzyme catalyses heme b + (2E,6E)-farnesyl diphosphate + H2O = Fe(II)-heme o + diphosphate. It participates in porphyrin-containing compound metabolism; heme O biosynthesis; heme O from protoheme: step 1/1. In terms of biological role, converts heme B (protoheme IX) to heme O by substitution of the vinyl group on carbon 2 of heme B porphyrin ring with a hydroxyethyl farnesyl side group. The sequence is that of Protoheme IX farnesyltransferase from Methylobacterium radiotolerans (strain ATCC 27329 / DSM 1819 / JCM 2831 / NBRC 15690 / NCIMB 10815 / 0-1).